Here is a 194-residue protein sequence, read N- to C-terminus: FMN-dependent NADH:quinone oxidoreductase (194 aa).

Residues S10, 16-18 (SQS), 91-94 (MYNF), and 135-138 (TRGG) contribute to the FMN site.

It belongs to the azoreductase type 1 family. Homodimer. FMN serves as cofactor.

It carries out the reaction 2 a quinone + NADH + H(+) = 2 a 1,4-benzosemiquinone + NAD(+). It catalyses the reaction N,N-dimethyl-1,4-phenylenediamine + anthranilate + 2 NAD(+) = 2-(4-dimethylaminophenyl)diazenylbenzoate + 2 NADH + 2 H(+). In terms of biological role, quinone reductase that provides resistance to thiol-specific stress caused by electrophilic quinones. Functionally, also exhibits azoreductase activity. Catalyzes the reductive cleavage of the azo bond in aromatic azo compounds to the corresponding amines. The chain is FMN-dependent NADH:quinone oxidoreductase from Vibrio parahaemolyticus serotype O3:K6 (strain RIMD 2210633).